The primary structure comprises 1025 residues: Exocyst complex component 6 (1025 aa).

Composition is skewed to basic and acidic residues over residues 1–10 and 22–52; these read MSNKKQKEEI and MVRD…ENVK. 3 disordered regions span residues 1–122, 135–154, and 666–691; these read MSNK…TRHL, LSSQ…DQAK, and QFGD…DENE. Residues 19 to 68 adopt a coiled-coil conformation; sequence LKTMVRDKDKEQKEEKREKKEKKRLEKKEAENVKKEKKKEKKELKKIGKA. The segment covering 71–93 has biased composition (low complexity); it reads SGSITSDSSTHSGAQEFDSYGND. Polar residues predominate over residues 104-118; sequence SIDSNGLSSSGQPMQ. Composition is skewed to low complexity over residues 135 to 147 and 666 to 677; these read LSSQ…LPHS and QFGDKNLNNNNN. Over residues 678–691 the composition is skewed to acidic residues; the sequence is NDDDDDYFDEDENE.

The protein belongs to the SEC15 family. As to quaternary structure, the exocyst complex is composed of sec3/exoc1, sec5/exoc2, sec6/exoc3, sec8/exoc4, sec10/exoc5, sec15/exoc6, exo70/exoc7 and exo84/exoc8.

The protein resides in the cytoplasm. It localises to the perinuclear region. The protein localises to the midbody. Its subcellular location is the midbody ring. Its function is as follows. Component of the exocyst complex involved in the docking of exocytic vesicles with fusion sites on the plasma membrane. The sequence is that of Exocyst complex component 6 (exoc6) from Dictyostelium discoideum (Social amoeba).